A 401-amino-acid chain; its full sequence is Voltage-gated potassium channel subunit beta-1 (401 aa).

NADP(+) is bound by residues Thr90, Trp91, Gln97, and Asp119. Tyr124 (proton donor/acceptor) is an active-site residue. NADP(+) contacts are provided by Asn192, Ser222, Arg223, Gln248, Trp277, Ser278, Pro279, Leu280, Ala281, Cys282, Lys288, Arg298, Gly357, Ser359, Gln363, Glu366, and Asn367.

The protein belongs to the shaker potassium channel beta subunit family. Homotetramer. Interaction with tetrameric potassium channel alpha subunits gives rise to a heterooctamer. Identified in potassium channel complexes containing KCNA1, KCNA2, KCNA4, KCNA5, KCNA6, KCNAB1 and KCNAB2. Part of a complex containing KCNA1, KCNA4 and LGI1; interaction with LGI1 inhibits down-regulation of KCNA1 channel activity. Interacts with the dimer formed by GNB1 and GNG2; this enhances KCNA1 binding. Interacts with SQSTM. In terms of tissue distribution, detected in brain, in hippocampus and striatum (at protein level). Predominantly expressed in brain. No expression found in heart, skeletal muscle or kidney. In the late embryonic and early neonatal brain, highly expressed in hippocampus, cerebral cortex, caudate putamen, colliculus and cerebellum.

Its subcellular location is the cytoplasm. The protein localises to the membrane. It is found in the cell membrane. The catalysed reaction is a primary alcohol + NADP(+) = an aldehyde + NADPH + H(+). The enzyme catalyses a secondary alcohol + NADP(+) = a ketone + NADPH + H(+). Functionally, regulatory subunit of the voltage-gated potassium (Kv) Shaker channels composed of pore-forming and potassium-conducting alpha subunits and of regulatory beta subunits. The beta-1/KCNAB1 cytoplasmic subunit mediates closure of delayed rectifier potassium channels by physically obstructing the pore via its N-terminal domain and increases the speed of channel closure for other family members. Promotes the inactivation of KCNA1, KCNA2, KCNA4, KCNA5 and KCNA6 alpha subunit-containing channels. Displays nicotinamide adenine dinucleotide phosphate (NADPH)-dependent aldoketoreductase activity by catalyzing the NADPH-dependent reduction of a variety of endogenous aldehydes and ketones. The binding of NADPH is required for efficient down-regulation of potassium channel activity. Oxidation of the bound NADPH restrains N-terminal domain from blocking the channel, thereby decreasing N-type inactivation of potassium channel activity. This Mus musculus (Mouse) protein is Voltage-gated potassium channel subunit beta-1.